The following is a 438-amino-acid chain: Ubiquitin carboxyl-terminal hydrolase 27 (438 aa).

The region spanning 78-421 is the USP domain; it reads RGLINLGNTC…EGYLLFYHKQ (344 aa). Cys87 functions as the Nucleophile in the catalytic mechanism. His380 (proton acceptor) is an active-site residue.

Belongs to the peptidase C19 family. Interacts with phosphorylated BCL2L11 isoform BIMEL; this interaction leads to BCL2L11 deubiquitination and stabilization.

The protein localises to the cytoplasm. The protein resides in the cytosol. Its subcellular location is the nucleus. The catalysed reaction is Thiol-dependent hydrolysis of ester, thioester, amide, peptide and isopeptide bonds formed by the C-terminal Gly of ubiquitin (a 76-residue protein attached to proteins as an intracellular targeting signal).. Functionally, deubiquitinase involved in innate antiviral immunity by mediating deubiquitination of CGAS and RIGI. Negatively regulates RIGI by mediating 'Lys-63'-linked deubiquitination of RIGI, inhibiting type I interferon signaling. Also regulates 'Lys-63'-linked ubiquitination level of MDA5/IFIH1. Acts as a positive regulator of the cGAS-STING pathway by catalyzing 'Lys-48'-linked deubiquitination of CGAS, thereby promoting its stabilization. Can reduce the levels of BCL2L11/BIM ubiquitination and stabilize BCL2L11 in response to the RAF-MAPK-degradation signal. By acting on BCL2L11 levels, may counteract the anti-apoptotic effects of MAPK activity. This is Ubiquitin carboxyl-terminal hydrolase 27 from Mus musculus (Mouse).